The primary structure comprises 478 residues: Centromere DNA-binding protein complex CBF3 subunit C (478 aa).

The interval 206 to 251 is disordered; the sequence is EVGEEKDVDVSGANSDENSSPSSTIKNKKRSASKRSHSDNGNVGAT. Residues 217-230 show a composition bias toward polar residues; it reads GANSDENSSPSSTI. Basic residues predominate over residues 231 to 240; it reads KNKKRSASKR.

In terms of assembly, component of the CBF3 copmplex, which is formed of CBF3A/CBF2, CBF3B/CEP3, CBF3C/CTF13 and CBF3D. CBF3C interacts with CBF3D and SGT1.

It is found in the nucleus. The protein localises to the chromosome. It localises to the centromere. In terms of biological role, acts as a central component of the centromere DNA-binding protein complex CBF3, which is essential for chromosome segregation and movement of centromeres along microtubules. CBF3 is required for the recruitment of other kinetochore complexes to CEN DNA. It plays a role in the attachment of chromosomes to the spindle and binds selectively to a highly conserved DNA sequence called CDEIII, found in centromers and in several promoters. The association of CBF3C with CBF3D and SGT1 is required for CBF3C activation and CBF3 assembly. This chain is Centromere DNA-binding protein complex CBF3 subunit C (CTF13), found in Saccharomyces cerevisiae (strain ATCC 204508 / S288c) (Baker's yeast).